Here is a 695-residue protein sequence, read N- to C-terminus: UvrABC system protein C (695 aa).

Over residues 1–10 the composition is skewed to basic and acidic residues; the sequence is MNHDPAETRD. The tract at residues 1 to 44 is disordered; the sequence is MNHDPAETRDTAAAPLADTESPSPVSPELTPHPAPAAQDIDTAT. A GIY-YIG domain is found at 88–166; sequence TSPGVYRMLN…IKQLRPRFNV (79 aa). One can recognise a UVR domain in the interval 276-311; sequence RAVKQELAVEMEKASNELEFETAALYRDRLAALSAI.

Belongs to the UvrC family. In terms of assembly, interacts with UvrB in an incision complex.

The protein localises to the cytoplasm. Functionally, the UvrABC repair system catalyzes the recognition and processing of DNA lesions. UvrC both incises the 5' and 3' sides of the lesion. The N-terminal half is responsible for the 3' incision and the C-terminal half is responsible for the 5' incision. In Rhodopseudomonas palustris (strain HaA2), this protein is UvrABC system protein C.